Consider the following 174-residue polypeptide: Profilin (174 aa).

The tract at residues 4 to 9 (YSWENF) is pro-rich sequence-binding. The Plasmodium-specific profilin mini-domain signature appears at 47–53 (FDKWSLF). Actin-binding stretches follow at residues 99–111 (KYQFINMDKGLEY) and 151–155 (RGNSK).

This sequence belongs to the profilin family. Binds actin.

It localises to the cytoplasm. It is found in the cytoskeleton. Essential for the invasive blood stages of the parasite. Binds to proline rich sequences in various regulatory formin-like proteins and also to membrane phospholipids. Binds to actin and affects the structure of the cytoskeleton. Weakly sequesters actin monomers. The sequence is that of Profilin from Plasmodium berghei.